Consider the following 135-residue polypeptide: Transcriptional activator protein (135 aa).

Residues 17–32 (KIQHHIAKKRQVRRRR) carry the Nuclear localization signal motif. A zinc finger spans residues 37–54 (CGCSYYIHLDCINHGFTH). Residues 120-135 (HLDDLTVSDWSFFKSL) are transactivation.

The protein belongs to the geminiviridae transcriptional activator protein family. In terms of assembly, monomer. Homodimer. Homooligomer. Self-interaction correlates with nuclear localization and efficient activation of transcription. Monomers suppress local silencing by interacting with and inactivating host adenosine kinase 2 (ADK2) in the cytoplasm. Interacts with and inhibits host SNF1 kinase. Binds to ssDNA. May interact with host RPS27A. In terms of processing, phosphorylated.

It is found in the host nucleus. Its subcellular location is the host cytoplasm. In terms of biological role, multifunctional protein that modulates host antiviral defenses and promotes host attractiveness to insect vectors. Acts as a suppressor of RNA-mediated gene silencing, also known as post-transcriptional gene silencing (PTGS), a mechanism of plant viral defense that limits the accumulation of viral RNAs. TrAP suppresses the host RNA silencing by inhibiting adenosine kinase 2 (ADK2), a kinase involved in a general methylation pathway. Also suppresses the host basal defense by interacting with and inhibiting SNF1 kinase, a key regulator of cell metabolism implicated in innate antiviral defense. Inhibits signal transduction by the phytohormone jasmonate, making the infected plant more attractive to aphids, which are the second host to play a role as a dissemination vector. Acts by binding to ubiquitin precursor RPS27A, thereby preventing ubiquitin degradation of JAZ. This Capsicum annuum (Capsicum pepper) protein is Transcriptional activator protein.